We begin with the raw amino-acid sequence, 419 residues long: L-rhamnose isomerase (419 aa).

Positions 262, 294, and 296 each coordinate Mn(2+).

The protein belongs to the rhamnose isomerase family. In terms of assembly, homotetramer. Requires Mn(2+) as cofactor.

It is found in the cytoplasm. The enzyme catalyses L-rhamnopyranose = L-rhamnulose. It participates in carbohydrate degradation; L-rhamnose degradation; glycerone phosphate from L-rhamnose: step 1/3. Functionally, catalyzes the interconversion of L-rhamnose and L-rhamnulose. This is L-rhamnose isomerase from Escherichia coli O6:H1 (strain CFT073 / ATCC 700928 / UPEC).